Here is a 234-residue protein sequence, read N- to C-terminus: Aspartate/glutamate leucyltransferase (234 aa).

This sequence belongs to the R-transferase family. Bpt subfamily.

It is found in the cytoplasm. It carries out the reaction N-terminal L-glutamyl-[protein] + L-leucyl-tRNA(Leu) = N-terminal L-leucyl-L-glutamyl-[protein] + tRNA(Leu) + H(+). The enzyme catalyses N-terminal L-aspartyl-[protein] + L-leucyl-tRNA(Leu) = N-terminal L-leucyl-L-aspartyl-[protein] + tRNA(Leu) + H(+). Functions in the N-end rule pathway of protein degradation where it conjugates Leu from its aminoacyl-tRNA to the N-termini of proteins containing an N-terminal aspartate or glutamate. The sequence is that of Aspartate/glutamate leucyltransferase from Hahella chejuensis (strain KCTC 2396).